Reading from the N-terminus, the 144-residue chain is Large ribosomal subunit protein uL11 (144 aa).

This sequence belongs to the universal ribosomal protein uL11 family. As to quaternary structure, part of the ribosomal stalk of the 50S ribosomal subunit. Interacts with L10 and the large rRNA to form the base of the stalk. L10 forms an elongated spine to which L12 dimers bind in a sequential fashion forming a multimeric L10(L12)X complex. One or more lysine residues are methylated.

In terms of biological role, forms part of the ribosomal stalk which helps the ribosome interact with GTP-bound translation factors. This chain is Large ribosomal subunit protein uL11, found in Polaromonas sp. (strain JS666 / ATCC BAA-500).